Consider the following 325-residue polypeptide: Ferrochelatase (325 aa).

Residues H172 and E267 each contribute to the Fe cation site.

It belongs to the ferrochelatase family.

It localises to the cytoplasm. The enzyme catalyses heme b + 2 H(+) = protoporphyrin IX + Fe(2+). It participates in porphyrin-containing compound metabolism; protoheme biosynthesis; protoheme from protoporphyrin-IX: step 1/1. Its function is as follows. Catalyzes the ferrous insertion into protoporphyrin IX. This chain is Ferrochelatase, found in Acidobacterium capsulatum (strain ATCC 51196 / DSM 11244 / BCRC 80197 / JCM 7670 / NBRC 15755 / NCIMB 13165 / 161).